Here is a 155-residue protein sequence, read N- to C-terminus: UPF0461 protein C5orf24 homolog (155 aa).

A compositionally biased stretch (polar residues) spans 1 to 10; it reads MMHPVASSNP. The segment at 1-20 is disordered; sequence MMHPVASSNPAFCGPGKPSC. The residue at position 37 (Ser-37) is a Phosphoserine. Residues 40 to 155 form a disordered region; that stretch reads SKYSHTVNHK…QQAFRCSSDA (116 aa). Residues 57–70 are compositionally biased toward polar residues; that stretch reads DPLNETHLQTTSGR. A Glycyl lysine isopeptide (Lys-Gly) (interchain with G-Cter in SUMO2) cross-link involves residue Lys-75. Basic residues predominate over residues 80–92; sequence KKKNLNRSGKRGR. Positions 94 to 107 are enriched in polar residues; the sequence is SGTTKSAGYRTSTG. Phosphoserine is present on Ser-121.

Belongs to the UPF0461 family.

In Pongo abelii (Sumatran orangutan), this protein is UPF0461 protein C5orf24 homolog.